The primary structure comprises 226 residues: Leucyl/phenylalanyl-tRNA--protein transferase (226 aa).

Belongs to the L/F-transferase family.

It is found in the cytoplasm. The enzyme catalyses N-terminal L-lysyl-[protein] + L-leucyl-tRNA(Leu) = N-terminal L-leucyl-L-lysyl-[protein] + tRNA(Leu) + H(+). It catalyses the reaction N-terminal L-arginyl-[protein] + L-leucyl-tRNA(Leu) = N-terminal L-leucyl-L-arginyl-[protein] + tRNA(Leu) + H(+). The catalysed reaction is L-phenylalanyl-tRNA(Phe) + an N-terminal L-alpha-aminoacyl-[protein] = an N-terminal L-phenylalanyl-L-alpha-aminoacyl-[protein] + tRNA(Phe). Its function is as follows. Functions in the N-end rule pathway of protein degradation where it conjugates Leu, Phe and, less efficiently, Met from aminoacyl-tRNAs to the N-termini of proteins containing an N-terminal arginine or lysine. In Bradyrhizobium diazoefficiens (strain JCM 10833 / BCRC 13528 / IAM 13628 / NBRC 14792 / USDA 110), this protein is Leucyl/phenylalanyl-tRNA--protein transferase.